Here is a 679-residue protein sequence, read N- to C-terminus: DNA ligase (679 aa).

NAD(+) is bound by residues 86 to 90 (DEAYD) and 129 to 130 (ST). Lysine 167 functions as the N6-AMP-lysine intermediate in the catalytic mechanism. 3 residues coordinate NAD(+): arginine 183, glutamate 214, and lysine 326. The Zn(2+) site is built by cysteine 417, cysteine 420, cysteine 433, and cysteine 439. Positions 599–679 (GEKSPISGKT…EAYRQLVSLD (81 aa)) constitute a BRCT domain.

It belongs to the NAD-dependent DNA ligase family. LigA subfamily. Requires Mg(2+) as cofactor. Mn(2+) serves as cofactor.

It catalyses the reaction NAD(+) + (deoxyribonucleotide)n-3'-hydroxyl + 5'-phospho-(deoxyribonucleotide)m = (deoxyribonucleotide)n+m + AMP + beta-nicotinamide D-nucleotide.. Its function is as follows. DNA ligase that catalyzes the formation of phosphodiester linkages between 5'-phosphoryl and 3'-hydroxyl groups in double-stranded DNA using NAD as a coenzyme and as the energy source for the reaction. It is essential for DNA replication and repair of damaged DNA. The chain is DNA ligase from Desulfotalea psychrophila (strain LSv54 / DSM 12343).